The following is an 877-amino-acid chain: Alanine--tRNA ligase (877 aa).

Zn(2+) contacts are provided by His562, His566, Cys664, and His668.

Belongs to the class-II aminoacyl-tRNA synthetase family. The cofactor is Zn(2+).

The protein localises to the cytoplasm. It carries out the reaction tRNA(Ala) + L-alanine + ATP = L-alanyl-tRNA(Ala) + AMP + diphosphate. Its function is as follows. Catalyzes the attachment of alanine to tRNA(Ala) in a two-step reaction: alanine is first activated by ATP to form Ala-AMP and then transferred to the acceptor end of tRNA(Ala). Also edits incorrectly charged Ser-tRNA(Ala) and Gly-tRNA(Ala) via its editing domain. This is Alanine--tRNA ligase from Picosynechococcus sp. (strain ATCC 27264 / PCC 7002 / PR-6) (Agmenellum quadruplicatum).